The following is a 552-amino-acid chain: Glutamine-dependent NAD(+) synthetase (552 aa).

Residues 5–245 enclose the CN hydrolase domain; the sequence is FRITLAQLNP…EAVVHVDLER (241 aa). Glu45 (proton acceptor; for glutaminase activity) is an active-site residue. Lys113 functions as the For glutaminase activity in the catalytic mechanism. The Nucleophile; for glutaminase activity role is filled by Cys149. The L-glutamine site is built by Ser175 and Lys181. Residues 275–552 are ligase; it reads LQDYLRKSGF…PMVNRWRDQS (278 aa). 290 to 297 is an ATP binding site; it reads GLSGGIDS. Asn373 contacts deamido-NAD(+). Position 397 (Thr397) interacts with ATP. The deamido-NAD(+) site is built by Glu402 and Lys521.

The protein in the C-terminal section; belongs to the NAD synthetase family.

The catalysed reaction is deamido-NAD(+) + L-glutamine + ATP + H2O = L-glutamate + AMP + diphosphate + NAD(+) + H(+). The protein operates within cofactor biosynthesis; NAD(+) biosynthesis; NAD(+) from deamido-NAD(+) (L-Gln route): step 1/1. Functionally, catalyzes the ATP-dependent amidation of deamido-NAD to form NAD. Uses L-glutamine as a nitrogen source. In Rhodobacter capsulatus (Rhodopseudomonas capsulata), this protein is Glutamine-dependent NAD(+) synthetase.